A 438-amino-acid polypeptide reads, in one-letter code: Xylose isomerase (438 aa).

Mg(2+) is bound by residues aspartate 306 and aspartate 308.

It belongs to the xylose isomerase family. In terms of assembly, homotetramer. Mg(2+) is required as a cofactor.

The protein localises to the cytoplasm. It carries out the reaction alpha-D-xylose = alpha-D-xylulofuranose. This chain is Xylose isomerase, found in Caldicellulosiruptor bescii (strain ATCC BAA-1888 / DSM 6725 / KCTC 15123 / Z-1320) (Anaerocellum thermophilum).